We begin with the raw amino-acid sequence, 162 residues long: Transcription elongation factor GreA (162 aa).

Residues 9–38 are a coiled coil; it reads QGYKALEEELARLKSERPEIIQAIKEAREE.

Belongs to the GreA/GreB family.

Necessary for efficient RNA polymerase transcription elongation past template-encoded arresting sites. The arresting sites in DNA have the property of trapping a certain fraction of elongating RNA polymerases that pass through, resulting in locked ternary complexes. Cleavage of the nascent transcript by cleavage factors such as GreA or GreB allows the resumption of elongation from the new 3'terminus. GreA releases sequences of 2 to 3 nucleotides. The polypeptide is Transcription elongation factor GreA (Desulfovibrio desulfuricans (strain ATCC 27774 / DSM 6949 / MB)).